The sequence spans 392 residues: Integrin-linked kinase-associated serine/threonine phosphatase 2C (392 aa).

Residue methionine 1 is modified to N-acetylmethionine. A disordered region spans residues methionine 1–glutamate 90. Position 13 is a phosphoserine (serine 13). A compositionally biased stretch (polar residues) spans serine 56 to valine 70. Residues threonine 72–glutamate 90 show a composition bias toward basic and acidic residues. A PPM-type phosphatase domain is found at lysine 108–isoleucine 390. Residues aspartate 152 and glycine 153 each coordinate Mn(2+). The residue at position 210 (lysine 210) is an N6-acetyllysine. Mn(2+) is bound by residues aspartate 326 and aspartate 381.

This sequence belongs to the PP2C family. In terms of assembly, interacts with ILK. Specific association with ILK is independent of the catalytic activity of either partner. It depends on Mg(2+) as a cofactor. Mn(2+) is required as a cofactor. Widely expressed. Highest levels expressed in striated muscle. Much lower levels evident in various smooth muscle tissues.

Its subcellular location is the cytoplasm. The enzyme catalyses O-phospho-L-seryl-[protein] + H2O = L-seryl-[protein] + phosphate. The catalysed reaction is O-phospho-L-threonyl-[protein] + H2O = L-threonyl-[protein] + phosphate. Inhibited rather than stimulated by magnesium. In terms of biological role, protein phosphatase that may play a role in regulation of cell cycle progression via dephosphorylation of its substrates whose appropriate phosphorylation states might be crucial for cell proliferation. Selectively associates with integrin linked kinase (ILK), to modulate cell adhesion and growth factor signaling. Inhibits the ILK-GSK3B signaling axis and may play an important role in inhibiting oncogenic transformation. This chain is Integrin-linked kinase-associated serine/threonine phosphatase 2C (ILKAP), found in Homo sapiens (Human).